The chain runs to 270 residues: Eukaryotic translation initiation factor 2 subunit beta (270 aa).

The tract at residues 1–38 is disordered; that stretch reads MADEEQMERKEEATEIAPFDPTKKKKKKKVVIQDPADE.

It belongs to the eIF-2-beta/eIF-5 family. As to quaternary structure, eukaryotic translation initiation factor 2 eIF2 is a heterotrimeric complex composed of an alpha, a beta and a gamma subunit.

The protein localises to the cytoplasm. It is found in the cytosol. Functionally, component of the eIF2 complex that functions in the early steps of protein synthesis by forming a ternary complex with GTP and initiator tRNA. This complex binds to a 40S ribosomal subunit, followed by mRNA binding to form a 43S pre-initiation complex (43S PIC). Junction of the 60S ribosomal subunit to form the 80S initiation complex is preceded by hydrolysis of the GTP bound to eIF2 and release of an eIF2-GDP binary complex. In order for eIF2 to recycle and catalyze another round of initiation, the GDP bound to eIF2 must exchange with GTP by way of a reaction catalyzed by eIF2B. This Triticum aestivum (Wheat) protein is Eukaryotic translation initiation factor 2 subunit beta.